The chain runs to 280 residues: RAD52 motif-containing protein 1 (280 aa).

The 84-residue stretch at 18–101 (KTIFIWDIQP…SPLKVRLSTK (84 aa)) folds into the RRM domain.

As to quaternary structure, homodimer.

The protein localises to the nucleus. It is found in the cytoplasm. Its subcellular location is the nucleolus. Its function is as follows. May confer resistance to the antitumor agent cisplatin. Binds to DNA and RNA. This chain is RAD52 motif-containing protein 1 (rdm1), found in Danio rerio (Zebrafish).